We begin with the raw amino-acid sequence, 418 residues long: Trimethyllysine dioxygenase, mitochondrial (418 aa).

Residues histidine 239, aspartate 241, and histidine 386 each coordinate Fe cation.

It belongs to the gamma-BBH/TMLD family. Homodimer. It depends on Fe(2+) as a cofactor. L-ascorbate serves as cofactor.

It is found in the mitochondrion matrix. The enzyme catalyses N(6),N(6),N(6)-trimethyl-L-lysine + 2-oxoglutarate + O2 = (3S)-3-hydroxy-N(6),N(6),N(6)-trimethyl-L-lysine + succinate + CO2. The protein operates within amine and polyamine biosynthesis; carnitine biosynthesis. Converts trimethyllysine (TML) into hydroxytrimethyllysine (HTML). In Gallus gallus (Chicken), this protein is Trimethyllysine dioxygenase, mitochondrial (TMLHE).